A 91-amino-acid chain; its full sequence is UPF0250 protein mma_3250 (91 aa).

The protein belongs to the UPF0250 family.

The chain is UPF0250 protein mma_3250 from Janthinobacterium sp. (strain Marseille) (Minibacterium massiliensis).